Consider the following 370-residue polypeptide: Flagellar P-ring protein (370 aa).

An N-terminal signal peptide occupies residues 1 to 24 (MTLSKWILSFGLSVCLIVSHPVSA).

The protein belongs to the FlgI family. The basal body constitutes a major portion of the flagellar organelle and consists of four rings (L,P,S, and M) mounted on a central rod.

Its subcellular location is the periplasm. The protein localises to the bacterial flagellum basal body. Its function is as follows. Assembles around the rod to form the L-ring and probably protects the motor/basal body from shearing forces during rotation. The polypeptide is Flagellar P-ring protein (Nitrosomonas europaea (strain ATCC 19718 / CIP 103999 / KCTC 2705 / NBRC 14298)).